The sequence spans 461 residues: Calcitonin gene-related peptide type 1 receptor (461 aa).

Positions 1-22 are cleaved as a signal peptide; that stretch reads MEKKCTLYFLVLLPFFMILVTA. At 23–139 the chain is on the extracellular side; sequence ELEESPEDSI…NTHEKVKTAL (117 aa). Intrachain disulfides connect C48/C74, C65/C105, and C88/C127. N66, N118, and N123 each carry an N-linked (GlcNAc...) asparagine glycan. A helical transmembrane segment spans residues 140-164; the sequence is NLFYLTIIGHGLSIASLLISLGIFF. Topologically, residues 165-175 are cytoplasmic; the sequence is YFKSLSCQRIT. A helical transmembrane segment spans residues 176 to 198; that stretch reads LHKNLFFSFVCNSVVTIIHLTAV. Residues 199 to 209 lie on the Extracellular side of the membrane; it reads ANNQALVATNP. The helical transmembrane segment at 210–238 threads the bilayer; that stretch reads VSCKVSQFIHLYLMGCNYFWMLCEGIYLH. The Cytoplasmic segment spans residues 239-252; the sequence is TLIVVAVFAEKQHL. Residues 253 to 273 form a helical membrane-spanning segment; that stretch reads MWYYFLGWGFPLIPACIHAIA. At 274–289 the chain is on the extracellular side; the sequence is RSLYYNDNCWISSDTH. Residues 288–289 are required for RAMP3 interaction; sequence TH. The helical transmembrane segment at 290–314 threads the bilayer; it reads LLYIIHGPICAALLVNLFFLLNIVR. The Cytoplasmic segment spans residues 315–329; the sequence is VLITKLKVTHQAESN. Residues 330-351 form a helical membrane-spanning segment; sequence LYMKAVRATLILVPLLGIEFVL. The Extracellular segment spans residues 352–366; it reads IPWRPEGKIAEEVYD. A helical transmembrane segment spans residues 367–387; the sequence is YIMHILMHFQGLLVSTIFCFF. Residues S420 and S445 each carry the phosphoserine modification.

This sequence belongs to the G-protein coupled receptor 2 family. As to quaternary structure, heterodimer of CALCRL and RAMP1; the receptor complex functions as CGRP receptor. Heterodimer of CALCRL and RAMP2 or CALCRL and RAMP3; the complexes function as adrenomedullin receptor. Predominantly expressed in the lung and heart.

It localises to the cell membrane. Functionally, g protein-coupled receptor which specificity is determined by its interaction with receptor-activity-modifying proteins (RAMPs). Together with RAMP1, form the receptor complex for calcitonin-gene-related peptides CALCA/CGRP1 and CALCB/CGRP2. Together with RAMP2 or RAMP3, function as receptor complexes for adrenomedullin (ADM and ADM2). Ligand binding causes a conformation change that triggers signaling via guanine nucleotide-binding proteins (G proteins) and modulates the activity of downstream effectors. Activates cAMP-dependent pathway. The sequence is that of Calcitonin gene-related peptide type 1 receptor from Homo sapiens (Human).